A 197-amino-acid chain; its full sequence is Carbohydrate-binding domain-containing protein C2E1P3.05c (197 aa).

Positions M1–A23 are cleaved as a signal peptide. CBM1 domains lie at Q25–I61 and P68–I104. Cystine bridges form between C33–C50, C44–C60, C76–C93, and C87–C103. A disordered region spans residues S115–T163. N-linked (GlcNAc...) asparagine glycosylation is found at N182 and N193.

It localises to the secreted. This chain is Carbohydrate-binding domain-containing protein C2E1P3.05c, found in Schizosaccharomyces pombe (strain 972 / ATCC 24843) (Fission yeast).